Reading from the N-terminus, the 316-residue chain is Probable cell division protein WhiA (316 aa).

The H-T-H motif DNA-binding region spans 280–313; the sequence is SLKELGEMLEPPVGKSGVNHRLRKIEKIAEELRT.

This sequence belongs to the WhiA family.

Functionally, involved in cell division and chromosome segregation. This chain is Probable cell division protein WhiA, found in Clostridium perfringens (strain 13 / Type A).